Consider the following 218-residue polypeptide: MSSSQKKAGGKAGKPTKRSQNYAALRKAQLPKPPALKVPVAKPTNTILPQTGCVWQSLGTPLSLSSFNGLGVRFLYSFLKDFTGPRILEEDLIYRMVFSITPSHAGTFCLTDDVTTEDGRAVAHGNPMQEFPHGAFHANEKFGFELVFTAPTHAGMQNQNFKHSYAVALCLDFDAQPEGSKNPSYRFNEVWVERKAFPRAGPLRSLITVGLLDEADDL.

Positions Met-1 to Leu-25 are disordered. The residue at position 2 (Ser-2) is an N-acetylserine; by host.

It belongs to the alphamovirus/ilarvirus capsid protein family.

It is found in the virion. Its function is as follows. Capsid protein. Binds to the to the 3' end of the nonpolyadenylated viral RNA and is involved in viral RNA translation initiation. Probably binds RNA and plays a role in packaging. This Alfalfa mosaic virus (strain Strasbourg) protein is Capsid protein.